Here is a 403-residue protein sequence, read N- to C-terminus: JmjC domain-containing histone demethylation protein 1 (403 aa).

Residues 141-328 form the JmjC domain; the sequence is WSLREWCNYF…QQLKIVDVEK (188 aa). Residue Thr221 coordinates substrate. Residues His224 and Asp226 each coordinate Fe cation. A substrate-binding site is contributed by Lys241. His296 lines the Fe cation pocket.

Belongs to the JHDM1 histone demethylase family. Fe(2+) is required as a cofactor.

The protein resides in the nucleus. It catalyses the reaction N(6),N(6)-dimethyl-L-lysyl(36)-[histone H3] + 2 2-oxoglutarate + 2 O2 = L-lysyl(36)-[histone H3] + 2 formaldehyde + 2 succinate + 2 CO2. Functionally, histone demethylase that specifically demethylates 'Lys-36' of histone H3, thereby playing a central role in histone code. This is JmjC domain-containing histone demethylation protein 1 (JHD1) from Candida glabrata (strain ATCC 2001 / BCRC 20586 / JCM 3761 / NBRC 0622 / NRRL Y-65 / CBS 138) (Yeast).